Consider the following 405-residue polypeptide: Phosphopentomutase (405 aa).

D10, D305, H310, D346, H347, and H358 together coordinate Mn(2+).

The protein belongs to the phosphopentomutase family. The cofactor is Mn(2+).

It localises to the cytoplasm. The enzyme catalyses 2-deoxy-alpha-D-ribose 1-phosphate = 2-deoxy-D-ribose 5-phosphate. It carries out the reaction alpha-D-ribose 1-phosphate = D-ribose 5-phosphate. It participates in carbohydrate degradation; 2-deoxy-D-ribose 1-phosphate degradation; D-glyceraldehyde 3-phosphate and acetaldehyde from 2-deoxy-alpha-D-ribose 1-phosphate: step 1/2. Its function is as follows. Isomerase that catalyzes the conversion of deoxy-ribose 1-phosphate (dRib-1-P) and ribose 1-phosphate (Rib-1-P) to deoxy-ribose 5-phosphate (dRib-5-P) and ribose 5-phosphate (Rib-5-P), respectively. This is Phosphopentomutase from Methylobacterium sp. (strain 4-46).